A 212-amino-acid chain; its full sequence is ATP phosphoribosyltransferase (212 aa).

This sequence belongs to the ATP phosphoribosyltransferase family. Short subfamily. Heteromultimer composed of HisG and HisZ subunits.

The protein resides in the cytoplasm. It carries out the reaction 1-(5-phospho-beta-D-ribosyl)-ATP + diphosphate = 5-phospho-alpha-D-ribose 1-diphosphate + ATP. The protein operates within amino-acid biosynthesis; L-histidine biosynthesis; L-histidine from 5-phospho-alpha-D-ribose 1-diphosphate: step 1/9. In terms of biological role, catalyzes the condensation of ATP and 5-phosphoribose 1-diphosphate to form N'-(5'-phosphoribosyl)-ATP (PR-ATP). Has a crucial role in the pathway because the rate of histidine biosynthesis seems to be controlled primarily by regulation of HisG enzymatic activity. In Clostridium botulinum (strain Okra / Type B1), this protein is ATP phosphoribosyltransferase.